A 905-amino-acid chain; its full sequence is Coatomer subunit beta' (905 aa).

WD repeat units lie at residues alanine 13–threonine 52, valine 55–methionine 94, alanine 97–glutamine 136, glycine 140–threonine 180, glycine 183–threonine 224, glycine 227–threonine 266, serine 350–phenylalanine 388, and serine 390–lysine 425. At lysine 627 the chain carries N6-acetyllysine. The stretch at isoleucine 746–lysine 783 is one WD 9 repeat. Residues glutamate 837–aspartate 905 form a disordered region. Serine 859 is subject to Phosphoserine. A coiled-coil region spans residues glutamine 867 to isoleucine 891. The span at glutamate 878 to aspartate 905 shows a compositional bias: acidic residues.

Belongs to the WD repeat COPB2 family. As to quaternary structure, oligomeric complex that consists of at least the alpha, beta, beta', gamma, delta, epsilon and zeta subunits. Probably interacts with PEX11A. Interacts with JAGN1. Interacts with SCYL1.

The protein resides in the cytoplasm. Its subcellular location is the cytosol. The protein localises to the golgi apparatus membrane. It is found in the cytoplasmic vesicle. It localises to the COPI-coated vesicle membrane. Its function is as follows. The coatomer is a cytosolic protein complex that binds to dilysine motifs and reversibly associates with Golgi non-clathrin-coated vesicles, which further mediate biosynthetic protein transport from the ER, via the Golgi up to the trans Golgi network. Coatomer complex is required for budding from Golgi membranes, and is essential for the retrograde Golgi-to-ER transport of dilysine-tagged proteins. In mammals, the coatomer can only be recruited by membranes associated to ADP-ribosylation factors (ARFs), which are small GTP-binding proteins; the complex also influences the Golgi structural integrity, as well as the processing, activity, and endocytic recycling of LDL receptors. In terms of biological role, this coatomer complex protein, essential for Golgi budding and vesicular trafficking, is a selective binding protein (RACK) for protein kinase C, epsilon type. It binds to Golgi membranes in a GTP-dependent manner. The chain is Coatomer subunit beta' (Copb2) from Rattus norvegicus (Rat).